The sequence spans 336 residues: Pyridoxal 5'-phosphate synthase subunit PdxS (336 aa).

D30 lines the D-ribose 5-phosphate pocket. Catalysis depends on K87, which acts as the Schiff-base intermediate with D-ribose 5-phosphate. G159 is a D-ribose 5-phosphate binding site. R171 contributes to the D-glyceraldehyde 3-phosphate binding site. Residues G257 and 278 to 279 (GS) contribute to the D-ribose 5-phosphate site.

This sequence belongs to the PdxS/SNZ family. As to quaternary structure, in the presence of PdxT, forms a dodecamer of heterodimers.

It carries out the reaction aldehydo-D-ribose 5-phosphate + D-glyceraldehyde 3-phosphate + L-glutamine = pyridoxal 5'-phosphate + L-glutamate + phosphate + 3 H2O + H(+). It participates in cofactor biosynthesis; pyridoxal 5'-phosphate biosynthesis. Functionally, catalyzes the formation of pyridoxal 5'-phosphate from ribose 5-phosphate (RBP), glyceraldehyde 3-phosphate (G3P) and ammonia. The ammonia is provided by the PdxT subunit. Can also use ribulose 5-phosphate and dihydroxyacetone phosphate as substrates, resulting from enzyme-catalyzed isomerization of RBP and G3P, respectively. The polypeptide is Pyridoxal 5'-phosphate synthase subunit PdxS (Thermoplasma volcanium (strain ATCC 51530 / DSM 4299 / JCM 9571 / NBRC 15438 / GSS1)).